A 195-amino-acid chain; its full sequence is GRF1-interacting factor 2 (195 aa).

The segment at 166-195 (QQPETGLGGNVGLRGGKQDGADGQGKDDGK) is disordered. The segment covering 171–180 (GLGGNVGLRG) has biased composition (gly residues). The span at 181 to 195 (GKQDGADGQGKDDGK) shows a compositional bias: basic and acidic residues.

The protein belongs to the SS18 family. As to quaternary structure, interacts with GRF1. Predominantly expressed in shoot tips containing the shoot apical meristem (SAM) and flower buds. Also expressed in mature flowers.

In terms of biological role, transcription coactivator that plays a role in the regulation of cell expansion in leaf and cotyledons tissues. Component of a network formed by miR396, the GRFs and their interacting factors (GIFs) acting in the regulation of meristem function, at least partially through the control of cell proliferation. GIFs are involved in the positive regulation of cell proliferation of lateral organs in a functionally redundant manner. In Arabidopsis thaliana (Mouse-ear cress), this protein is GRF1-interacting factor 2 (GIF2).